A 256-amino-acid polypeptide reads, in one-letter code: Enoyl-[acyl-carrier-protein] reductase [NADPH] FabI (256 aa).

Residues G13, 19 to 20 (SI), 40 to 44 (RKERS), 66 to 67 (DV), and I94 contribute to the NADP(+) site. A97 is a substrate binding site. Residues Y147 and Y157 each act as proton acceptor in the active site. NADP(+)-binding positions include K164 and 193–197 (IRTLS).

Belongs to the short-chain dehydrogenases/reductases (SDR) family. FabI subfamily. As to quaternary structure, homotetramer.

It carries out the reaction a 2,3-saturated acyl-[ACP] + NADP(+) = a (2E)-enoyl-[ACP] + NADPH + H(+). It functions in the pathway lipid metabolism; fatty acid biosynthesis. With respect to regulation, inhibited by 1,4-disubstituted imidazoles, 1,4-benzodiazepine, naphthyridinone derivatives, triclosan and its diphenyl ether analgues. Its function is as follows. Catalyzes the reduction of a carbon-carbon double bond in an enoyl moiety that is covalently linked to an acyl carrier protein (ACP). It has a preference for a long chain (C12) substrate compared to the shorter (C4) acyl group. Involved in the elongation cycle of fatty acid which are used in the lipid metabolism. The polypeptide is Enoyl-[acyl-carrier-protein] reductase [NADPH] FabI (fabI) (Staphylococcus aureus (strain NCTC 8325 / PS 47)).